The sequence spans 445 residues: Xylose isomerase (445 aa).

Active-site residues include histidine 107 and aspartate 110. Residues glutamate 238, glutamate 274, histidine 277, aspartate 302, aspartate 313, aspartate 315, and aspartate 345 each contribute to the Mg(2+) site.

The protein belongs to the xylose isomerase family. As to quaternary structure, homotetramer. It depends on Mg(2+) as a cofactor.

The protein localises to the cytoplasm. It catalyses the reaction alpha-D-xylose = alpha-D-xylulofuranose. This Bacillus pumilus (strain SAFR-032) protein is Xylose isomerase.